Here is a 184-residue protein sequence, read N- to C-terminus: ATP synthase subunit delta (184 aa).

Belongs to the ATPase delta chain family. As to quaternary structure, F-type ATPases have 2 components, F(1) - the catalytic core - and F(0) - the membrane proton channel. F(1) has five subunits: alpha(3), beta(3), gamma(1), delta(1), epsilon(1). F(0) has three main subunits: a(1), b(2) and c(10-14). The alpha and beta chains form an alternating ring which encloses part of the gamma chain. F(1) is attached to F(0) by a central stalk formed by the gamma and epsilon chains, while a peripheral stalk is formed by the delta and b chains.

It is found in the cell inner membrane. Functionally, f(1)F(0) ATP synthase produces ATP from ADP in the presence of a proton or sodium gradient. F-type ATPases consist of two structural domains, F(1) containing the extramembraneous catalytic core and F(0) containing the membrane proton channel, linked together by a central stalk and a peripheral stalk. During catalysis, ATP synthesis in the catalytic domain of F(1) is coupled via a rotary mechanism of the central stalk subunits to proton translocation. Its function is as follows. This protein is part of the stalk that links CF(0) to CF(1). It either transmits conformational changes from CF(0) to CF(1) or is implicated in proton conduction. The sequence is that of ATP synthase subunit delta from Zymomonas mobilis subsp. mobilis (strain ATCC 31821 / ZM4 / CP4).